The primary structure comprises 85 residues: Cell division topological specificity factor (85 aa).

Belongs to the MinE family.

Functionally, prevents the cell division inhibition by proteins MinC and MinD at internal division sites while permitting inhibition at polar sites. This ensures cell division at the proper site by restricting the formation of a division septum at the midpoint of the long axis of the cell. This Shewanella baltica (strain OS223) protein is Cell division topological specificity factor.